The following is a 92-amino-acid chain: Cell division topological specificity factor (92 aa).

This sequence belongs to the MinE family.

Functionally, prevents the cell division inhibition by proteins MinC and MinD at internal division sites while permitting inhibition at polar sites. This ensures cell division at the proper site by restricting the formation of a division septum at the midpoint of the long axis of the cell. The polypeptide is Cell division topological specificity factor (Colwellia psychrerythraea (strain 34H / ATCC BAA-681) (Vibrio psychroerythus)).